Consider the following 391-residue polypeptide: Probable FAD-dependent oxidoreductase PA4991 (391 aa).

FAD contacts are provided by residues alanine 17, glutamate 36, 44–45, 49–51, and 346–347; these read QS, QGI, and LA.

It belongs to the DAO family. In terms of assembly, monomer. It depends on FAD as a cofactor.

Probably functions as a FAD-dependent oxidoreductase, whose physiological substrate is unknown. Does not display amino-acid oxidase or glycerol-3-phosphate dehydrogenase activities. Is essential for growth of P.aeruginosa in the sputum of cystic fibrosis patients. This Pseudomonas aeruginosa (strain ATCC 15692 / DSM 22644 / CIP 104116 / JCM 14847 / LMG 12228 / 1C / PRS 101 / PAO1) protein is Probable FAD-dependent oxidoreductase PA4991.